A 158-amino-acid chain; its full sequence is Cyclic pyranopterin monophosphate synthase (158 aa).

Residues 74–76 (MCH) and 112–113 (ME) contribute to the substrate site. The active site involves Asp127.

It belongs to the MoaC family. As to quaternary structure, homohexamer; trimer of dimers.

The catalysed reaction is (8S)-3',8-cyclo-7,8-dihydroguanosine 5'-triphosphate = cyclic pyranopterin phosphate + diphosphate. The protein operates within cofactor biosynthesis; molybdopterin biosynthesis. Functionally, catalyzes the conversion of (8S)-3',8-cyclo-7,8-dihydroguanosine 5'-triphosphate to cyclic pyranopterin monophosphate (cPMP). In Helicobacter pylori (strain J99 / ATCC 700824) (Campylobacter pylori J99), this protein is Cyclic pyranopterin monophosphate synthase.